Here is a 355-residue protein sequence, read N- to C-terminus: MAKLLGLTLVGLVLALYKNHRSSYQTRLNAFREVTPVDLPNCTLVKGIEAGAEDLEILPNGLTFFSTGLKYPGIKSFDPSKPGKILLMDLNEKEPAVSELAIMGNTLDMSSFNPHGISTFIDEDNTVYLLVVSHPDSSSTVEVFKFQEEERSLLHLKTITHELLPSINDIAAVGPESFYATNDHYFADPYLRSWEMYLGLSWSNVVYYSPDKVRVVADGFDFANGIGISLDGKYVYIAELLAHKIHVYEKHANWTLTPLKVLSFDTLVDNISVDPVTGDLWVGCHPNGMRIFFYDSENPPGSEVLRIQSILSEDPKVTVVYAENGTVLQGTTVAAVYKGKLLIGTVFHRALCCDL.

A disulfide bridge links Cys42 with Cys353. Positions 53 and 54 each coordinate Ca(2+). Catalysis depends on His115, which acts as the Proton acceptor. Ca(2+) is bound by residues Ile117, Asn168, Asp169, and Asn224. N-linked (GlcNAc...) asparagine glycosylation is present at Asn253. Residues Asp269 and Asn270 each contribute to the Ca(2+) site. Asn270 and Asn324 each carry an N-linked (GlcNAc...) asparagine glycan.

This sequence belongs to the paraoxonase family. In terms of assembly, homodimer. Interacts with CLU. It depends on Ca(2+) as a cofactor. In terms of processing, glycosylated. Post-translationally, the signal sequence is not cleaved. As to expression, plasma. Associated with HDL.

It localises to the secreted. It is found in the extracellular space. The enzyme catalyses a phenyl acetate + H2O = a phenol + acetate + H(+). It catalyses the reaction An aryl dialkyl phosphate + H2O = dialkyl phosphate + an aryl alcohol.. The catalysed reaction is an N-acyl-L-homoserine lactone + H2O = an N-acyl-L-homoserine + H(+). Hydrolyzes the toxic metabolites of a variety of organophosphorus insecticides. Capable of hydrolyzing a broad spectrum of organophosphate substrates and lactones, and a number of aromatic carboxylic acid esters. Mediates an enzymatic protection of low density lipoproteins against oxidative modification. This Rattus norvegicus (Rat) protein is Serum paraoxonase/arylesterase 1 (Pon1).